The sequence spans 209 residues: Large ribosomal subunit protein uL3 (209 aa).

Residues 141–163 form a disordered region; sequence RAVGSMGASSDPSRTFKNKRMPG.

The protein belongs to the universal ribosomal protein uL3 family. Part of the 50S ribosomal subunit. Forms a cluster with proteins L14 and L19.

Its function is as follows. One of the primary rRNA binding proteins, it binds directly near the 3'-end of the 23S rRNA, where it nucleates assembly of the 50S subunit. The chain is Large ribosomal subunit protein uL3 from Clostridium botulinum (strain Kyoto / Type A2).